The following is an 89-amino-acid chain: Small ribosomal subunit protein uS15 (89 aa).

Belongs to the universal ribosomal protein uS15 family. Part of the 30S ribosomal subunit. Forms a bridge to the 50S subunit in the 70S ribosome, contacting the 23S rRNA.

In terms of biological role, one of the primary rRNA binding proteins, it binds directly to 16S rRNA where it helps nucleate assembly of the platform of the 30S subunit by binding and bridging several RNA helices of the 16S rRNA. Its function is as follows. Forms an intersubunit bridge (bridge B4) with the 23S rRNA of the 50S subunit in the ribosome. The chain is Small ribosomal subunit protein uS15 from Mycobacterium leprae (strain Br4923).